The primary structure comprises 642 residues: Threonine--tRNA ligase (642 aa).

The 61-residue stretch at 1-61 folds into the TGS domain; that stretch reads MPVITLPDGS…ETDAELSIIT (61 aa). Residues 243-534 are catalytic; sequence DHRKIGKQLD…LIEEYAGRFP (292 aa). Zn(2+) is bound by residues C334, H385, and H511.

This sequence belongs to the class-II aminoacyl-tRNA synthetase family. Homodimer. The cofactor is Zn(2+).

It localises to the cytoplasm. It catalyses the reaction tRNA(Thr) + L-threonine + ATP = L-threonyl-tRNA(Thr) + AMP + diphosphate + H(+). Catalyzes the attachment of threonine to tRNA(Thr) in a two-step reaction: L-threonine is first activated by ATP to form Thr-AMP and then transferred to the acceptor end of tRNA(Thr). Also edits incorrectly charged L-seryl-tRNA(Thr). This is Threonine--tRNA ligase from Shewanella baltica (strain OS195).